A 313-amino-acid chain; its full sequence is Ribose-phosphate pyrophosphokinase (313 aa).

Residues 37–39 (DGE) and 96–97 (RQ) each bind ATP. The Mg(2+) site is built by His-131 and Asp-170. Lys-193 is an active-site residue. Residues Arg-195, Asp-219, and 223–227 (DTAGT) each bind D-ribose 5-phosphate.

It belongs to the ribose-phosphate pyrophosphokinase family. Class I subfamily. In terms of assembly, homohexamer. Requires Mg(2+) as cofactor.

The protein localises to the cytoplasm. The enzyme catalyses D-ribose 5-phosphate + ATP = 5-phospho-alpha-D-ribose 1-diphosphate + AMP + H(+). Its pathway is metabolic intermediate biosynthesis; 5-phospho-alpha-D-ribose 1-diphosphate biosynthesis; 5-phospho-alpha-D-ribose 1-diphosphate from D-ribose 5-phosphate (route I): step 1/1. Involved in the biosynthesis of the central metabolite phospho-alpha-D-ribosyl-1-pyrophosphate (PRPP) via the transfer of pyrophosphoryl group from ATP to 1-hydroxyl of ribose-5-phosphate (Rib-5-P). This chain is Ribose-phosphate pyrophosphokinase, found in Pseudomonas syringae pv. tomato (strain ATCC BAA-871 / DC3000).